We begin with the raw amino-acid sequence, 140 residues long: Large-conductance mechanosensitive channel (140 aa).

A run of 3 helical transmembrane segments spans residues 7 to 27 (EFAF…GAAF), 30 to 50 (IITS…FGTV), and 64 to 84 (GLFV…FLFV).

Belongs to the MscL family. Homopentamer.

The protein localises to the cell membrane. Functionally, channel that opens in response to stretch forces in the membrane lipid bilayer. May participate in the regulation of osmotic pressure changes within the cell. The sequence is that of Large-conductance mechanosensitive channel from Staphylococcus carnosus (strain TM300).